Reading from the N-terminus, the 883-residue chain is Brevican core protein (883 aa).

Positions 1–22 (MIPLLLSLLAALVLTQAPAALA) are cleaved as a signal peptide. The 120-residue stretch at 35–154 (FRVRIGATQL…SSDAVEVKVK (120 aa)) folds into the Ig-like V-type domain. 5 disulfides stabilise this stretch: cysteine 56/cysteine 136, cysteine 178/cysteine 249, cysteine 202/cysteine 223, cysteine 276/cysteine 351, and cysteine 300/cysteine 321. N-linked (GlcNAc...) asparagine glycosylation occurs at asparagine 129. Link domains follow at residues 156-251 (VVFL…YCYA) and 256-353 (GELF…YCFR). Serine 224 is subject to Phosphoserine. The N-linked (GlcNAc...) asparagine glycan is linked to asparagine 336. The disordered stretch occupies residues 402–592 (SIPISEDGGG…LETPSEEKSG (191 aa)). Serine 413 carries the post-translational modification Phosphoserine. Residue serine 413 is glycosylated (O-linked (Xyl...) (chondroitin sulfate) serine). 2 stretches are compositionally biased toward acidic residues: residues 440 to 451 (SSEEEGVALEEE) and 459 to 468 (ALEEEKEQED). Residues 479–495 (PLPTGSETEHSLSQVSP) show a composition bias toward polar residues. The span at 581–592 (RELETPSEEKSG) shows a compositional bias: basic and acidic residues. Positions 622–658 (SSGDCIPSPCHNGGTCLEEKEGFRCLCLPGYGGDLCD) constitute an EGF-like domain. 8 disulfides stabilise this stretch: cysteine 626–cysteine 637, cysteine 631–cysteine 646, cysteine 648–cysteine 657, cysteine 664–cysteine 675, cysteine 692–cysteine 784, cysteine 760–cysteine 776, cysteine 791–cysteine 834, and cysteine 820–cysteine 847. The C-type lectin domain occupies 658–786 (DVGLHFCSPG…NYHLSYTCKM (129 aa)). In terms of domain architecture, Sushi spans 789–849 (VSCGPPPQLP…WEAPQISCVP (61 aa)). A disordered region spans residues 854-883 (RALRSMDAPEGPRGQLSRHRKAPLTPPSSL).

The protein belongs to the aggrecan/versican proteoglycan family. Interacts with TNR. O-glycosylated; contains chondroitin sulfate. As to expression, expressed in the retina, specifically around the inner and outer segments of photoreceptors, retinal pigment epithelium, outer plexiform layer, and the ganglion cell layer (at protein level). Brain. Expressed in the brainstem and cerebellum in a perineuronal net pattern.

It localises to the secreted. It is found in the extracellular space. Its subcellular location is the extracellular matrix. May play a role in the terminally differentiating and the adult nervous system during postnatal development. Could stabilize interactions between hyaluronan (HA) and brain proteoglycans. The chain is Brevican core protein (Bcan) from Mus musculus (Mouse).